Consider the following 225-residue polypeptide: Uridylate kinase (225 aa).

9–10 (GS) is a binding site for ATP. Gly-46 provides a ligand contact to UMP. ATP-binding residues include Gly-47 and Arg-51. UMP-binding positions include Asp-67 and 115-121 (THPAHTT). ATP is bound by residues Thr-141, Asn-142, Tyr-147, and Asp-150.

This sequence belongs to the UMP kinase family. In terms of assembly, homohexamer.

It localises to the cytoplasm. The enzyme catalyses UMP + ATP = UDP + ADP. It functions in the pathway pyrimidine metabolism; CTP biosynthesis via de novo pathway; UDP from UMP (UMPK route): step 1/1. Inhibited by UTP. Functionally, catalyzes the reversible phosphorylation of UMP to UDP. This chain is Uridylate kinase, found in Methanococcus aeolicus (strain ATCC BAA-1280 / DSM 17508 / OCM 812 / Nankai-3).